The primary structure comprises 250 residues: Sugar fermentation stimulation protein homolog (250 aa).

It belongs to the SfsA family.

The sequence is that of Sugar fermentation stimulation protein homolog from Synechococcus sp. (strain CC9311).